The chain runs to 275 residues: Putative ABC transporter permease protein ORF2 (275 aa).

6 consecutive transmembrane segments (helical) span residues 11–31, 74–94, 108–128, 136–156, 185–205, and 239–259; these read YFIF…FMLF, IAVS…AFAF, LIIA…YVLT, TVFA…IFIL, ILLP…GTYL, and IPAI…AYIF. The region spanning 69 to 260 is the ABC transmembrane type-1 domain; that stretch reads LKNSVIAVSI…LPMLIAYIFG (192 aa).

The protein belongs to the binding-protein-dependent transport system permease family. MalFG subfamily.

Its subcellular location is the cell membrane. This Caldicellulosiruptor sp. (strain Rt8B.4) protein is Putative ABC transporter permease protein ORF2.